The primary structure comprises 173 residues: Small ribosomal subunit protein uS5 (173 aa).

Residues 17–80 (WQERVIQIRR…ADGKKQLIDV (64 aa)) enclose the S5 DRBM domain.

It belongs to the universal ribosomal protein uS5 family. Part of the 30S ribosomal subunit. Contacts proteins S4 and S8.

With S4 and S12 plays an important role in translational accuracy. Its function is as follows. Located at the back of the 30S subunit body where it stabilizes the conformation of the head with respect to the body. This Crocosphaera subtropica (strain ATCC 51142 / BH68) (Cyanothece sp. (strain ATCC 51142)) protein is Small ribosomal subunit protein uS5.